A 91-amino-acid polypeptide reads, in one-letter code: Thioredoxin (91 aa).

One can recognise a Thioredoxin domain in the interval 2-91 (SDSIVHVTDD…SRQSEVEATK (90 aa)). A disulfide bond links Cys33 and Cys36.

It belongs to the thioredoxin family.

Participates in various redox reactions through the reversible oxidation of its active center dithiol to a disulfide and catalyzes dithiol-disulfide exchange reactions. The sequence is that of Thioredoxin (trxA) from Thiocapsa roseopersicina.